The primary structure comprises 462 residues: MYGKIEKIHFVGIGGIGMSGIAEVLLNLGYKVSGSDLKQSDTTDRLASLGGEIRFGHGRENVADVDVVVTSTAVRDDNPEVVEAKRRMIPVIPRAEMLAELMRMKYGIAIAGTHGKTTTTSMVATVLTHGGIDPTIVIGGKLNTLGTNAKLGQGQFLVAEADESDGSFLKLSPTIAVVTNIDADHLDFYTGGIEQIKDTFVDFINKIPFYGLAVLCLEDRNIAEILPRVKKRFVTYGLSSQADIRATHIRLEGGTTSFVAHYKGYRMGEVSFSMPGAHNVLNALACIAVAMELDVPFSQIQEGFATFGGVGRRFQVKGEVNGITVVDDYGHHPAEIRATLAAGKSGWPERRLVVAFQPHRFSRTRELFAEFVTCFYDADVLVLTDIYPAGEAPIEGVSAERLAEEIRKHGQRDVTYVADREALPEHLLTIVQPGDIVLTLGAGNIWQSGEAFLAKLEEARQA.

112 to 118 contributes to the ATP binding site; it reads GTHGKTT.

Belongs to the MurCDEF family.

Its subcellular location is the cytoplasm. The enzyme catalyses UDP-N-acetyl-alpha-D-muramate + L-alanine + ATP = UDP-N-acetyl-alpha-D-muramoyl-L-alanine + ADP + phosphate + H(+). The protein operates within cell wall biogenesis; peptidoglycan biosynthesis. Functionally, cell wall formation. The polypeptide is UDP-N-acetylmuramate--L-alanine ligase (Geobacter sulfurreducens (strain ATCC 51573 / DSM 12127 / PCA)).